Reading from the N-terminus, the 301-residue chain is Elongation factor Ts (301 aa).

Positions 82-85 (TDFV) are involved in Mg(2+) ion dislocation from EF-Tu.

This sequence belongs to the EF-Ts family.

The protein resides in the cytoplasm. Associates with the EF-Tu.GDP complex and induces the exchange of GDP to GTP. It remains bound to the aminoacyl-tRNA.EF-Tu.GTP complex up to the GTP hydrolysis stage on the ribosome. The sequence is that of Elongation factor Ts from Hyphomonas neptunium (strain ATCC 15444).